The chain runs to 848 residues: Adenylate cyclase (848 aa).

Positions 1–535 (MYLYIETLKQ…DVSHHFPLRL (535 aa)) are catalytic. Positions 541-848 (KALYSPCEIR…DTPLLQQYFS (308 aa)) are regulatory. H609 carries the post-translational modification Phosphohistidine; by CRR.

The protein belongs to the adenylyl cyclase class-1 family.

Its subcellular location is the cytoplasm. It carries out the reaction ATP = 3',5'-cyclic AMP + diphosphate. The regulatory domain is involved in the regulation of cyclase activity by the carbon source. Activated by the PTS system, glucose-specific IIA component (CRR). In terms of biological role, catalyzes the formation of the second messenger cAMP from ATP. Its transcript is probably degraded by endoribonuclease LS (rnlA), decreasing cAMP levels and the negative regulator Crp-cAMP, which then induces its own transcription again. This chain is Adenylate cyclase (cyaA), found in Escherichia coli (strain K12).